Reading from the N-terminus, the 515-residue chain is 13S globulin seed storage protein (515 aa).

The first 22 residues, 1 to 22 (MSTKLILSFSLCLMVLSCSAQA), serve as a signal peptide directing secretion. The interval 23–96 (AQLWPWRKGQ…RYVIQPGGLL (74 aa)) is igE-binding epitope. Cystine bridges form between Cys47–Cys80 and Cys123–Cys327. The 221-residue stretch at 52 to 272 (LTASEPSRRV…FRDVDRETIS (221 aa)) folds into the Cupin type-1 1 domain. The interval 97 to 172 (LPSYSNAPYI…REGDVIPSPA (76 aa)) is igE-binding epitope with a very strong IgE-binding activity. Disordered regions lie at residues 123–156 (CPET…GDQH), 210–241 (LAGQ…ESDD), and 295–320 (PEDS…GRSN). 3 stretches are compositionally biased toward basic and acidic residues: residues 141 to 156 (HSRE…GDQH), 217 to 239 (GREE…SRES), and 295 to 316 (PEDS…ERGS). IgE-binding epitope regions lie at residues 173–248 (GVVQ…LIGA) and 249–320 (NILS…GRSN). The region spanning 333–482 (QNVNRPSHAD…SYDISTEEAY (150 aa)) is the Cupin type-1 2 domain. Residues 347-387 (RAGRINTVNSNNLPILEFLQLSAQHVVLYKNAIIGPRWNLN) form an igE-binding epitope with a strong IgE-binding activity region. IgE-binding epitope stretches follow at residues 407–457 (EGKS…PIAG), 440–476 (EWVE…SYDI), and 475–511 (DIST…ERER).

Belongs to the 11S seed storage protein (globulins) family. As to quaternary structure, homohexamer. Post-translationally, proteolytically processed from a single precursor to produce an acidic and a basic chain that are linked by a disulfide bond. As to expression, expressed in seeds (at protein level).

Seed storage protein. The sequence is that of 13S globulin seed storage protein from Fagopyrum tataricum (Tartarian buckwheat).